A 122-amino-acid polypeptide reads, in one-letter code: Chorismate mutase AroH (122 aa).

Residues 2-120 (VRGIRGAITV…AVRLRPDLES (119 aa)) enclose the Chorismate mutase aroH-type domain. Prephenate-binding residues include arginine 6, arginine 89, and tyrosine 107.

Homotrimer.

It localises to the cytoplasm. It carries out the reaction chorismate = prephenate. It participates in metabolic intermediate biosynthesis; prephenate biosynthesis; prephenate from chorismate: step 1/1. Its activity is regulated as follows. Inhibited by 40% with 500 uM tyrosine, and a tyrosine concentration as high as 5 mM reduced activity to 5%. In terms of biological role, catalyzes the Claisen rearrangement of chorismate to prephenate. Probably involved in the aromatic amino acid biosynthesis. This chain is Chorismate mutase AroH, found in Thermus thermophilus.